A 77-amino-acid polypeptide reads, in one-letter code: Acyl carrier protein (77 aa).

Positions 1 to 76 (MAVFDEVKDV…DVVNYIDGLK (76 aa)) constitute a Carrier domain. Position 36 is an O-(pantetheine 4'-phosphoryl)serine (serine 36).

Belongs to the acyl carrier protein (ACP) family. In terms of processing, 4'-phosphopantetheine is transferred from CoA to a specific serine of apo-ACP by AcpS. This modification is essential for activity because fatty acids are bound in thioester linkage to the sulfhydryl of the prosthetic group.

Its subcellular location is the cytoplasm. It participates in lipid metabolism; fatty acid biosynthesis. Its function is as follows. Carrier of the growing fatty acid chain in fatty acid biosynthesis. The polypeptide is Acyl carrier protein (Campylobacter fetus subsp. fetus (strain 82-40)).